A 192-amino-acid chain; its full sequence is Flagellar transcriptional regulator FlhC (192 aa).

Zn(2+) contacts are provided by Cys-137, Cys-140, Cys-157, and Cys-160.

Belongs to the FlhC family. In terms of assembly, heterohexamer composed of two FlhC and four FlhD subunits. Each FlhC binds a FlhD dimer, forming a heterotrimer, and a hexamer assembles by dimerization of two heterotrimers. The cofactor is Zn(2+).

The protein localises to the cytoplasm. Its function is as follows. Functions in complex with FlhD as a master transcriptional regulator that regulates transcription of several flagellar and non-flagellar operons by binding to their promoter region. Activates expression of class 2 flagellar genes, including fliA, which is a flagellum-specific sigma factor that turns on the class 3 genes. Also regulates genes whose products function in a variety of physiological pathways. The polypeptide is Flagellar transcriptional regulator FlhC (Escherichia coli O6:H1 (strain CFT073 / ATCC 700928 / UPEC)).